The following is an 804-amino-acid chain: Leucine--tRNA ligase (804 aa).

Positions 40–51 (PYPSGAGLHVGH) match the 'HIGH' region motif. The 'KMSKS' region motif lies at 576 to 580 (KMSKS). Lys579 lines the ATP pocket.

This sequence belongs to the class-I aminoacyl-tRNA synthetase family.

Its subcellular location is the cytoplasm. It carries out the reaction tRNA(Leu) + L-leucine + ATP = L-leucyl-tRNA(Leu) + AMP + diphosphate. This is Leucine--tRNA ligase from Staphylococcus epidermidis (strain ATCC 35984 / DSM 28319 / BCRC 17069 / CCUG 31568 / BM 3577 / RP62A).